Consider the following 153-residue polypeptide: Endoribonuclease YbeY (153 aa).

The Zn(2+) site is built by His-114, His-118, and His-124.

Belongs to the endoribonuclease YbeY family. Zn(2+) is required as a cofactor.

Its subcellular location is the cytoplasm. Single strand-specific metallo-endoribonuclease involved in late-stage 70S ribosome quality control and in maturation of the 3' terminus of the 16S rRNA. This Shewanella baltica (strain OS185) protein is Endoribonuclease YbeY.